The primary structure comprises 385 residues: Acetoin utilization protein AcuC (385 aa).

This sequence belongs to the histone deacetylase family.

It participates in ketone degradation; acetoin degradation. Role in growth on acetoin or butanediol. Involved in the breakdown of these compounds used as a carbon source. This chain is Acetoin utilization protein AcuC (acuC), found in Staphylococcus xylosus.